Here is a 393-residue protein sequence, read N- to C-terminus: MGGVDFEGFRKLQRADGFASILAIGTANPPNAVDQSTYPDFYFRITGNEHNTELKDKFKRICERSAIKQRYMYLTEEILKKNPDVCAFVEVPSLDARQAMLAMEVPRLAKEAAEKAIQEWGQSKSGITHLIFCSTTTPDLPGADFEVAKLLGLHPSVKRVGVFQHGCFAGGTVLRMAKDLAENNRGARVLVICSETTAVTFRGPSETHLDSLVGQALFGDGASALIVGADPIPQVEKACFEIVWTAQTVVPNSEGAIGGKVREVGLTFQLKGAVPDLISANIENCMVEAFSQFKISDWNKLFWVVHPGGRAILDRVEAKLNLDPTKLIPTRHVMSEYGNMSSACVHFILDQTRKASLQNGCSTTGEGLEMGVLFGFGPGLTIETVVLKSVPIQ.

57–60 serves as a coordination point for substrate; that stretch reads KFKR. Cys167 is a catalytic residue. Substrate contacts are provided by residues Leu270 and 308–310; that span reads GGR.

Belongs to the thiolase-like superfamily. Chalcone/stilbene synthases family. Homodimer.

It is found in the cytoplasm. It carries out the reaction (E)-cinnamoyl-CoA + 3 malonyl-CoA + 3 H(+) = (E)-pinosylvin + 4 CO2 + 4 CoA. The enzyme catalyses 3-phenylpropanoyl-CoA + 3 malonyl-CoA + 3 H(+) = dihydropinosylvin + 4 CO2 + 4 CoA. It participates in phytoalexin biosynthesis; hydropinosylvin biosynthesis. In terms of biological role, catalyzes the production of pinosylvin from cinnamoyl-CoA and malonyl-CoA, and dihydropinosylvin from dihydrocinnamoyl-CoA. The sequence is that of Pinosylvin synthase from Pinus sylvestris (Scotch pine).